We begin with the raw amino-acid sequence, 328 residues long: Probable magnesium transporter NIPA6 (328 aa).

Over 1 to 4 the chain is Extracellular; it reads METD. The helical transmembrane segment at 5–25 threads the bilayer; it reads NGKGLILAVASSVFIGSSFIL. Topologically, residues 26-51 are cytoplasmic; that stretch reads KKKGLKRAGAIGTRAGYGGYTYLLEP. The helical transmembrane segment at 52–72 threads the bilayer; the sequence is LWWAGMVTMIVGEAANFVAYI. Over 73–76 the chain is Extracellular; that stretch reads YAPA. A helical transmembrane segment spans residues 77–97; that stretch reads VLVTPLGALSIIISAVLAHFL. The Cytoplasmic portion of the chain corresponds to 98–104; that stretch reads LKEKLKK. Residues 105-125 traverse the membrane as a helical segment; it reads MGVLGCVSCIVGSVVIVIHAP. At 126 to 142 the chain is on the extracellular side; that stretch reads KEQTPNSVEEIWNLATQ. The helical transmembrane segment at 143-163 threads the bilayer; the sequence is PAFLIYVAITMSIVLALILHF. At 164-175 the chain is on the cytoplasmic side; sequence EPLCGQTNILVY. A helical membrane pass occupies residues 176–196; that stretch reads IGICSLMGALTVMSIKAIGIA. At 197–209 the chain is on the extracellular side; the sequence is IKLTMEGVSQIGY. A helical transmembrane segment spans residues 210–230; that stretch reads PQTWLFVMVAVTCVVTQLIYL. Topologically, residues 231–240 are cytoplasmic; sequence NKALDTFNAA. A helical transmembrane segment spans residues 241–261; it reads IVSPVYYVMFTTLTIVASAIM. Topologically, residues 262 to 269 are extracellular; it reads FKDWSGQD. The chain crosses the membrane as a helical span at residues 270–290; it reads AASVASELCGFITVLTGTMIL. The Cytoplasmic portion of the chain corresponds to 291–328; sequence HGTREEEQQQASSEHVRWYDSRKSMNEEHLVSLYSPEY.

It belongs to the NIPA (TC 2.A.7) family. In terms of assembly, homodimer.

It localises to the cell membrane. The protein localises to the early endosome. Its function is as follows. Acts as a Mg(2+) transporter. Can also transport other divalent cations such as Fe(2+), Sr(2+), Ba(2+), Mn(2+) and Co(2+) but to a much less extent than Mg(2+). This Arabidopsis thaliana (Mouse-ear cress) protein is Probable magnesium transporter NIPA6.